We begin with the raw amino-acid sequence, 292 residues long: Expansin-B11 (292 aa).

The first 27 residues, 1-27, serve as a signal peptide directing secretion; that stretch reads MAKSCTLVLLLVALVGLSLLVSPIACS. N-linked (GlcNAc...) asparagine glycosylation occurs at Asn-51. One can recognise an Expansin-like EG45 domain in the interval 82-192; sequence GGACGYQTAV…RRVPCKYSGV (111 aa). 3 cysteine pairs are disulfide-bonded: Cys-85/Cys-114, Cys-117/Cys-187, and Cys-122/Cys-128. The Expansin-like CBD domain maps to 205–287; sequence FYFEVLIEFE…SWKPGVTYRS (83 aa).

It belongs to the expansin family. Expansin B subfamily. In terms of tissue distribution, expressed in internodes.

It localises to the secreted. Its subcellular location is the cell wall. The protein localises to the membrane. Its function is as follows. May cause loosening and extension of plant cell walls by disrupting non-covalent bonding between cellulose microfibrils and matrix glucans. No enzymatic activity has been found. May be required for rapid internodal elongation in deepwater rice during submergence. This is Expansin-B11 (EXPB11) from Oryza sativa subsp. japonica (Rice).